Consider the following 309-residue polypeptide: Carboxylesterase Culp6 homolog (309 aa).

A helical transmembrane segment spans residues 5 to 25; the sequence is ITVIAVLIVLALIGVGIVQYV. A disulfide bond links cysteine 55 and cysteine 146. Residues serine 157, aspartate 253, and histidine 279 contribute to the active site. Residues cysteine 249 and cysteine 256 are joined by a disulfide bond.

It belongs to the cutinase family.

It is found in the cell membrane. It catalyses the reaction a butanoate ester + H2O = an aliphatic alcohol + butanoate + H(+). Its activity is regulated as follows. Inhibited by tetrahydrolipstatin (THL), a specific lipase inhibitor. Esterase that may be involved in cell wall biosynthesis and/or maintenance. Hydrolyzes pNP-butyrate (C4). This Corynebacterium glutamicum (strain ATCC 13032 / DSM 20300 / JCM 1318 / BCRC 11384 / CCUG 27702 / LMG 3730 / NBRC 12168 / NCIMB 10025 / NRRL B-2784 / 534) protein is Carboxylesterase Culp6 homolog.